Here is a 566-residue protein sequence, read N- to C-terminus: 3'-5' exoribonuclease parn-1 (566 aa).

Asp-29, Glu-31, Asp-283, and Asp-379 together coordinate a divalent metal cation.

This sequence belongs to the CAF1 family. A divalent metal cation serves as cofactor. Expressed in germline cells.

The protein localises to the cytoplasm. In terms of biological role, involved in transcriptome surveillance. Required for piwi-interacting RNAs (piRNAs) 3'-end trimming, which is important for both fertility and piRNA-directed gene silencing. Has 3' to 5' exonuclease activity in vitro. The sequence is that of 3'-5' exoribonuclease parn-1 from Caenorhabditis elegans.